The primary structure comprises 320 residues: L-lactate dehydrogenase (320 aa).

Residues Val18, Asp39, Arg44, Tyr69, and 83 to 84 (GA) each bind NAD(+). Substrate-binding residues include Gln86 and Arg92. NAD(+) contacts are provided by residues Ser105, 122-124 (AAN), and Ser147. Residue 124-127 (NPVD) participates in substrate binding. 152-155 (DSSR) is a substrate binding site. His179 acts as the Proton acceptor in catalysis. Tyr223 is modified (phosphotyrosine). Thr232 is a substrate binding site.

This sequence belongs to the LDH/MDH superfamily. LDH family. As to quaternary structure, homotetramer.

Its subcellular location is the cytoplasm. It catalyses the reaction (S)-lactate + NAD(+) = pyruvate + NADH + H(+). The protein operates within fermentation; pyruvate fermentation to lactate; (S)-lactate from pyruvate: step 1/1. With respect to regulation, the quaternary structure is constitutionally similar to the active conformation of allosteric LDHs, and the regulation is independent of the fructose 1,6-bisphosphate-binding site. Functionally, catalyzes the conversion of lactate to pyruvate. The chain is L-lactate dehydrogenase from Lactiplantibacillus pentosus (Lactobacillus pentosus).